Reading from the N-terminus, the 260-residue chain is Snake venom serine protease salmobin (260 aa).

The signal sequence occupies residues 1–18 (MVLIKVLANHLILQLSYA). A propeptide spanning residues 19–24 (QKSSEL) is cleaved from the precursor. The 227-residue stretch at 25 to 251 (VIGGDECNIN…YTDWIQSIIA (227 aa)) folds into the Peptidase S1 domain. Cystine bridges form between Cys-31–Cys-165, Cys-52–Cys-68, Cys-102–Cys-258, Cys-144–Cys-212, Cys-176–Cys-191, and Cys-202–Cys-227. Catalysis depends on His-67, which acts as the Charge relay system. An N-linked (GlcNAc...) asparagine glycan is attached at Asn-105. Asp-112 acts as the Charge relay system in catalysis. N-linked (GlcNAc...) asparagine glycosylation is found at Asn-123 and Asn-156. The active-site Charge relay system is Ser-206.

Belongs to the peptidase S1 family. Snake venom subfamily. As to quaternary structure, monomer. As to expression, expressed by the venom gland.

The protein resides in the secreted. In terms of biological role, snake venom serine protease that may act in the hemostasis system of the prey. This chain is Snake venom serine protease salmobin, found in Gloydius halys (Chinese water mocassin).